We begin with the raw amino-acid sequence, 375 residues long: Queuine tRNA-ribosyltransferase (375 aa).

The active-site Proton acceptor is the Asp-94. Substrate is bound by residues 94–98 (DSGGF), Asp-148, Gln-191, and Gly-218. The segment at 249-255 (GVGTPED) is RNA binding. Asp-268 serves as the catalytic Nucleophile. Positions 273–277 (TRIAR) are RNA binding; important for wobble base 34 recognition. Residues Cys-306, Cys-308, Cys-311, and His-337 each contribute to the Zn(2+) site.

The protein belongs to the queuine tRNA-ribosyltransferase family. In terms of assembly, homodimer. Within each dimer, one monomer is responsible for RNA recognition and catalysis, while the other monomer binds to the replacement base PreQ1. Zn(2+) is required as a cofactor.

The enzyme catalyses 7-aminomethyl-7-carbaguanine + guanosine(34) in tRNA = 7-aminomethyl-7-carbaguanosine(34) in tRNA + guanine. The protein operates within tRNA modification; tRNA-queuosine biosynthesis. In terms of biological role, catalyzes the base-exchange of a guanine (G) residue with the queuine precursor 7-aminomethyl-7-deazaguanine (PreQ1) at position 34 (anticodon wobble position) in tRNAs with GU(N) anticodons (tRNA-Asp, -Asn, -His and -Tyr). Catalysis occurs through a double-displacement mechanism. The nucleophile active site attacks the C1' of nucleotide 34 to detach the guanine base from the RNA, forming a covalent enzyme-RNA intermediate. The proton acceptor active site deprotonates the incoming PreQ1, allowing a nucleophilic attack on the C1' of the ribose to form the product. After dissociation, two additional enzymatic reactions on the tRNA convert PreQ1 to queuine (Q), resulting in the hypermodified nucleoside queuosine (7-(((4,5-cis-dihydroxy-2-cyclopenten-1-yl)amino)methyl)-7-deazaguanosine). The chain is Queuine tRNA-ribosyltransferase from Caldanaerobacter subterraneus subsp. tengcongensis (strain DSM 15242 / JCM 11007 / NBRC 100824 / MB4) (Thermoanaerobacter tengcongensis).